The primary structure comprises 406 residues: MTEHLPMPQFGPLAGVRVVFSGIEIAGPFAGQMFAEWGAEVIWIENVAWADTIRVQPHYPQLSRRNLHALSLNIFKDGGRDAFLKLMETTDIFIEASKGPAFARRGITDEVLWEHNPKLVIAHLSGFGQYGDPQYTNLPAYNTIAQAFSGYLIQNGDKDQPMPAFPYTADYFSGMTATTSALAALYKVQQTGKGESIDIAMYEVMLRMGQYFMMDYFNGGEICPRMTKGKEPYYAGCGLYRCQDGYIVMEVVGITQIEEIFKDIGLAHLLGTPEVPKGTQLIHRINCPHGQLFEDELDEWLANQPITAVLKRLSELNIASAKVLTIPELEGNPQYVARESITQWKTMSGETCKGPNIMPKFKNNPGKIWRGMPAHGMDTNAILKNIGYSDEQIRELVDKGLAKIVE.

Residues lysine 98 and arginine 105 each coordinate CoA. Catalysis depends on aspartate 170, which acts as the Nucleophile.

This sequence belongs to the CoA-transferase III family. CaiB subfamily. Homodimer.

It is found in the cytoplasm. The catalysed reaction is crotonobetainyl-CoA + (R)-carnitine = crotonobetaine + (R)-carnitinyl-CoA. The enzyme catalyses 4-(trimethylamino)butanoyl-CoA + (R)-carnitine = (R)-carnitinyl-CoA + 4-(trimethylamino)butanoate. It functions in the pathway amine and polyamine metabolism; carnitine metabolism. Its function is as follows. Catalyzes the reversible transfer of the CoA moiety from gamma-butyrobetainyl-CoA to L-carnitine to generate L-carnitinyl-CoA and gamma-butyrobetaine. Is also able to catalyze the reversible transfer of the CoA moiety from gamma-butyrobetainyl-CoA or L-carnitinyl-CoA to crotonobetaine to generate crotonobetainyl-CoA. The protein is L-carnitine CoA-transferase (caiB) of Proteus sp. (strain LE138).